A 187-amino-acid polypeptide reads, in one-letter code: Large ribosomal subunit protein uL5 (187 aa).

It belongs to the universal ribosomal protein uL5 family. As to quaternary structure, part of the 50S ribosomal subunit; part of the 5S rRNA/L5/L18/L25 subcomplex. Contacts the 5S rRNA and the P site tRNA. Forms a bridge to the 30S subunit in the 70S ribosome.

This is one of the proteins that bind and probably mediate the attachment of the 5S RNA into the large ribosomal subunit, where it forms part of the central protuberance. In the 70S ribosome it contacts protein S13 of the 30S subunit (bridge B1b), connecting the 2 subunits; this bridge is implicated in subunit movement. Contacts the P site tRNA; the 5S rRNA and some of its associated proteins might help stabilize positioning of ribosome-bound tRNAs. The sequence is that of Large ribosomal subunit protein uL5 from Brachyspira hyodysenteriae (strain ATCC 49526 / WA1).